A 165-amino-acid polypeptide reads, in one-letter code: RNA polymerase II transcriptional coactivator KELP (165 aa).

The DEK-C domain maps to 3 to 60 (KETKEKIEKTVIEILSESDMKEITEFKVRKLASEKLAIDLSEKSHKAFVRSVVEKFLD). A disordered region spans residues 66–93 (EYENSQVNKEEEDGDKDCGKGNKEFDDD).

The protein belongs to the transcriptional coactivator PC4 family.

It localises to the nucleus. General coactivator that functions cooperatively with TAFs and mediates functional interactions between upstream activators and the general transcriptional machinery. Binds single-stranded DNA. The protein is RNA polymerase II transcriptional coactivator KELP (KELP) of Arabidopsis thaliana (Mouse-ear cress).